A 529-amino-acid polypeptide reads, in one-letter code: MNHRYTLLALAAAALSAGAHATGTSVTAPWGEVAEPSLPADSAVCKTLSASITPIKGSVDSVDGNPANSQPDASRIQSAIDNCPAGQAVKLVKGSAGESGFLSGSLKLKSGVTLWIDTGVTLFASRNPADYDNGLGTCGTATTSNDKSCNALIVARDTAGSGIVGAGAIDGRGGSLVTSGPNANRLTWWDIAYLNKTKGLNQQNPRLIQTYNGSAFTLYGVTVQNSPNFHIVTTGTSGVTAWGIKIVTPSLAYAVAGYKCPSGSTPDKVTPATCFTPETVKNTDGFDPGQSTNVVLAYSYINTGDDHVAVKASSGPTRNLLFAHNHFYYGHGLSIGSETNTGVSNMLVTDLTMDGNDSSAGNGLRIKSDASRGGKVTNIVYDGICMRNVKEPLVFDPFYSSVKGSLYPNFTNIVVKNFHDLGSAKSIKRTMTFLGYKANKQKNPLTITLDNVVFDGTLPAFEGSHYGGPASPNGVHFTFGGTGPVSFADAIVTSSTTDVTVTGTPGTAAAVDCSKAFVPLKSVAPTSPI.

The signal sequence occupies residues 1–21 (MNHRYTLLALAAAALSAGAHA). Asp-305 acts as the Proton donor in catalysis. His-331 is a catalytic residue. The tract at residues 516–529 (AFVPLKSVAPTSPI) is required for PGA export across the outer membrane and catalytic activity.

It belongs to the glycosyl hydrolase 28 family. Monomer.

The protein resides in the secreted. It catalyses the reaction (1,4-alpha-D-galacturonosyl)n+m + H2O = (1,4-alpha-D-galacturonosyl)n + (1,4-alpha-D-galacturonosyl)m.. Contributes to the wilt disease production on tomato. This is Polygalacturonase (pglA) from Ralstonia solanacearum (Pseudomonas solanacearum).